Reading from the N-terminus, the 512-residue chain is MENKEAGTPPPIPSREGRLQPTLLLATLSAAFGSAFQYGYNLSVVNTPHKVFKSFYNETYFERHATFMDGKLMLLLWSCTVSMFPLGGLLGSLLVGLLVDSCGRKGTLLINNIFAIIPAILMGVSKVAKAFELIVFSRVVLGVCAGISYSALPMYLGELAPKNLRGMVGTMTEVFVIVGVFLAQIFSLQAILGNPAGWPVLLALTGVPALLQLLTLPFFPESPRYSLIQKGDEATARQALRRLRGHTDMEAELEDMRAEARAERAEGHLSVLHLCALRSLRWQLLSIIVLMAGQQLSGINAINYYADTIYTSAGVEAAHSQYVTVGSGVVNIVMTITSAVLVERLGRRHLLLAGYGICGSACLVLTVVLLFQNRVPELSYLGIICVFAYIAGHSIGPSPVPSVVRTEIFLQSSRRAAFMVDGAVHWLTNFIIGFLFPSIQEAIGAYSFIIFAGICLLTAIYIYVVIPETKGKTFVEINRIFAKRNRVKLPEEKEETIDAGPPTASPAKETSF.

Residues 1 to 21 (MENKEAGTPPPIPSREGRLQP) are Cytoplasmic-facing. A helical transmembrane segment spans residues 22-42 (TLLLATLSAAFGSAFQYGYNL). The Extracellular portion of the chain corresponds to 43 to 78 (SVVNTPHKVFKSFYNETYFERHATFMDGKLMLLLWS). N-linked (GlcNAc...) asparagine glycosylation occurs at asparagine 57. A helical transmembrane segment spans residues 79-99 (CTVSMFPLGGLLGSLLVGLLV). Over 100-107 (DSCGRKGT) the chain is Cytoplasmic. A helical membrane pass occupies residues 108 to 128 (LLINNIFAIIPAILMGVSKVA). The Extracellular segment spans residues 129-138 (KAFELIVFSR). A helical membrane pass occupies residues 139–159 (VVLGVCAGISYSALPMYLGEL). Over 160–172 (APKNLRGMVGTMT) the chain is Cytoplasmic. Residues 173-193 (EVFVIVGVFLAQIFSLQAILG) form a helical membrane-spanning segment. Residues 194 to 198 (NPAGW) lie on the Extracellular side of the membrane. Residues 199–219 (PVLLALTGVPALLQLLTLPFF) traverse the membrane as a helical segment. The Cytoplasmic segment spans residues 220-281 (PESPRYSLIQ…LHLCALRSLR (62 aa)). A helical membrane pass occupies residues 282–302 (WQLLSIIVLMAGQQLSGINAI). D-glucose-binding positions include 294–295 (QQ) and asparagine 300. The Extracellular segment spans residues 303–321 (NYYADTIYTSAGVEAAHSQ). The chain crosses the membrane as a helical span at residues 322 to 342 (YVTVGSGVVNIVMTITSAVLV). Asparagine 331 provides a ligand contact to D-glucose. Residues 343–350 (ERLGRRHL) lie on the Cytoplasmic side of the membrane. A helical membrane pass occupies residues 351-371 (LLAGYGICGSACLVLTVVLLF). Over 372 to 379 (QNRVPELS) the chain is Extracellular. A helical transmembrane segment spans residues 380 to 400 (YLGIICVFAYIAGHSIGPSPV). The Cytoplasmic portion of the chain corresponds to 401 to 415 (PSVVRTEIFLQSSRR). A helical membrane pass occupies residues 416-436 (AAFMVDGAVHWLTNFIIGFLF). At 437-445 (PSIQEAIGA) the chain is on the extracellular side. A helical transmembrane segment spans residues 446–466 (YSFIIFAGICLLTAIYIYVVI). At 467–512 (PETKGKTFVEINRIFAKRNRVKLPEEKEETIDAGPPTASPAKETSF) the chain is on the cytoplasmic side. Residues 491-512 (EEKEETIDAGPPTASPAKETSF) are disordered.

The protein belongs to the major facilitator superfamily. Sugar transporter (TC 2.A.1.1) family. Glucose transporter subfamily. Expressed in small intestine and colon. Weakly expressed in testis and prostate.

The protein localises to the cell membrane. The protein resides in the apical cell membrane. It carries out the reaction D-glucose(out) = D-glucose(in). The catalysed reaction is D-fructose(out) = D-fructose(in). With respect to regulation, glucose and fructose transport are inhibited by the flavonoid apigenin. Probable sugar transporter. Even if its physiological substrate is subject to discussion, it is able to transport glucose and fructose. Does not transport galactose, 2-deoxy-d-glucose and xylose. This is Solute carrier family 2, facilitated glucose transporter member 7 from Homo sapiens (Human).